A 488-amino-acid chain; its full sequence is UDP-N-acetylmuramate--L-alanine ligase (488 aa).

An ATP-binding site is contributed by 122–128 (GTHGKTT).

It belongs to the MurCDEF family.

The protein localises to the cytoplasm. It catalyses the reaction UDP-N-acetyl-alpha-D-muramate + L-alanine + ATP = UDP-N-acetyl-alpha-D-muramoyl-L-alanine + ADP + phosphate + H(+). It functions in the pathway cell wall biogenesis; peptidoglycan biosynthesis. Functionally, cell wall formation. The chain is UDP-N-acetylmuramate--L-alanine ligase from Mycobacterium marinum (strain ATCC BAA-535 / M).